Consider the following 192-residue polypeptide: HTH-type transcriptional regulator Hpr (192 aa).

In terms of domain architecture, HTH marR-type spans 12–156; that stretch reads SIIFSHKFAQ…LLSIVRHVYG (145 aa). The H-T-H motif DNA-binding region spans 62-85; that stretch reads ISDIAKFGVMHVSTAFNFSKKLEE.

Homodimer.

Functionally, negative regulator of protease production and sporulation. The chain is HTH-type transcriptional regulator Hpr from Halalkalibacterium halodurans (strain ATCC BAA-125 / DSM 18197 / FERM 7344 / JCM 9153 / C-125) (Bacillus halodurans).